Consider the following 335-residue polypeptide: Ig gamma-2A chain C region secreted form (335 aa).

3 Ig-like domains span residues P6–E98, P126–S225, and P234–S330. N-linked (GlcNAc...) asparagine glycosylation occurs at N185.

It localises to the secreted. This Mus musculus (Mouse) protein is Ig gamma-2A chain C region secreted form.